The sequence spans 295 residues: ATP synthase gamma chain (295 aa).

Belongs to the ATPase gamma chain family. F-type ATPases have 2 components, CF(1) - the catalytic core - and CF(0) - the membrane proton channel. CF(1) has five subunits: alpha(3), beta(3), gamma(1), delta(1), epsilon(1). CF(0) has three main subunits: a, b and c.

The protein resides in the cell inner membrane. Its function is as follows. Produces ATP from ADP in the presence of a proton gradient across the membrane. The gamma chain is believed to be important in regulating ATPase activity and the flow of protons through the CF(0) complex. The chain is ATP synthase gamma chain from Aliarcobacter butzleri (strain RM4018) (Arcobacter butzleri).